Here is a 1387-residue protein sequence, read N- to C-terminus: DNA-directed RNA polymerase subunit beta'' (1387 aa).

Zn(2+) contacts are provided by C224, C295, C302, and C305. The disordered stretch occupies residues 883–903; it reads SHTGKRNDPAGSGLIPDNGSD.

It belongs to the RNA polymerase beta' chain family. RpoC2 subfamily. As to quaternary structure, in plastids the minimal PEP RNA polymerase catalytic core is composed of four subunits: alpha, beta, beta', and beta''. When a (nuclear-encoded) sigma factor is associated with the core the holoenzyme is formed, which can initiate transcription. Zn(2+) is required as a cofactor.

The protein resides in the plastid. Its subcellular location is the chloroplast. It catalyses the reaction RNA(n) + a ribonucleoside 5'-triphosphate = RNA(n+1) + diphosphate. DNA-dependent RNA polymerase catalyzes the transcription of DNA into RNA using the four ribonucleoside triphosphates as substrates. This chain is DNA-directed RNA polymerase subunit beta'', found in Platanus occidentalis (Sycamore).